The chain runs to 31 residues: Elongation factor Tu (31 aa).

It belongs to the GTP-binding elongation factor family. EF-Tu/EF-1A subfamily. As to quaternary structure, monomer.

The protein resides in the cytoplasm. Functionally, this protein promotes the GTP-dependent binding of aminoacyl-tRNA to the A-site of ribosomes during protein biosynthesis. The sequence is that of Elongation factor Tu (tuf) from Streptomyces laurentii.